Consider the following 92-residue polypeptide: Small ribosomal subunit protein uS19 (92 aa).

Belongs to the universal ribosomal protein uS19 family.

Protein S19 forms a complex with S13 that binds strongly to the 16S ribosomal RNA. This Trichormus variabilis (strain ATCC 29413 / PCC 7937) (Anabaena variabilis) protein is Small ribosomal subunit protein uS19.